Consider the following 92-residue polypeptide: Alpha-elapitoxin-Lh2a (92 aa).

A signal peptide spans 1 to 21; sequence MKTLLLTLVVVTIVCLDLGDS. Disulfide bonds link Cys-24–Cys-41, Cys-34–Cys-62, Cys-47–Cys-51, Cys-66–Cys-77, and Cys-78–Cys-83.

It belongs to the three-finger toxin family. Long-chain subfamily. Type II alpha-neurotoxin sub-subfamily. In terms of tissue distribution, expressed by the venom gland.

Its subcellular location is the secreted. Functionally, binds with high affinity to muscular (alpha-1/CHRNA1) and neuronal (alpha-7/CHRNA7) nicotinic acetylcholine receptor (nAChR) and inhibits acetylcholine from binding to the receptor, thereby impairing neuromuscular and neuronal transmission. The polypeptide is Alpha-elapitoxin-Lh2a (Hydrophis hardwickii (Hardwick's spine-bellied seasnake)).